Reading from the N-terminus, the 662-residue chain is Polyunsaturated fatty acid (12S)/(13S)-lipoxygenase, epidermal-type (662 aa).

The region spanning 2–114 (GKYKILVVTG…TIYLPEGTAL (113 aa)) is the PLAT domain. The region spanning 114–662 (LKVNDDTKNL…PSMVENSVTI (549 aa)) is the Lipoxygenase domain. The Fe cation site is built by His360, His365, His540, His544, and Ile662.

This sequence belongs to the lipoxygenase family. The cofactor is Fe cation.

It is found in the cytoplasm. The catalysed reaction is (5Z,8Z,11Z,14Z)-eicosatetraenoate + O2 = (12S)-hydroperoxy-(5Z,8Z,10E,14Z)-eicosatetraenoate. The enzyme catalyses 1-O-methyl-(9Z,12Z)-octadecadienoate + O2 = 1-O-methyl-(13S)-hydroperoxy-(9Z,11E)-octadecadienoate. It carries out the reaction (8Z,11Z,14Z)-eicosatrienoate + O2 = (12S)-hydroperoxy-(8Z,10E,14Z)-eicosatrienoate. It catalyses the reaction (5Z,8Z,11Z)-eicosatrienoate + O2 = (12S)-hydroperoxy-(5Z,8Z,10E)-eicosatrienoate. The catalysed reaction is 1-O-methyl-(5Z,8Z,11Z,14Z)-eicosatetraenoate + O2 = 1-O-methyl-(12S)-hydroperoxy-(5Z,8Z,10E,14Z)-eicosatetraenoate. The enzyme catalyses (9Z,12Z)-octadecadienoate + O2 = (13S)-hydroperoxy-(9Z,11E)-octadecadienoate. It carries out the reaction (4Z,7Z,10Z,13Z,16Z,19Z)-docosahexaenoate + O2 = (14S)-hydroperoxy-(4Z,7Z,10Z,12E,16Z,19Z)-docosahexaenoate. The protein operates within lipid metabolism; hydroperoxy eicosatetraenoic acid biosynthesis. With respect to regulation, arachidonate 12-lipoxygenase activity is decreased when the pH decreases from 7.4 to 6.0. Catalyzes the regio and stereo-specific incorporation of a single molecule of dioxygen into free and esterified polyunsaturated fatty acids generating lipid hydroperoxides that can be further reduced to the corresponding hydroxy species. Shows increasing catalytic activity within the series arachidonic acid &lt; 5,8,11-eicosatrienoic acid &lt; linoleic acid &lt; 8,11,14-eicosatrienoic acid. In Rattus norvegicus (Rat), this protein is Polyunsaturated fatty acid (12S)/(13S)-lipoxygenase, epidermal-type.